A 205-amino-acid polypeptide reads, in one-letter code: Protein phosphatase inhibitor 2 (205 aa).

Residues 1–44 form a disordered region; it reads MAASTASHRPIKGILKNKTSTTSSVVASAEQPRRTVEEELSKKS. Residue Ala-2 is modified to N-acetylalanine. Residues 12–17 form a required for binding PPP1CC region; sequence KGILKN. A compositionally biased stretch (low complexity) spans 19 to 29; that stretch reads TSTTSSVVASA. A compositionally biased stretch (basic and acidic residues) spans 31 to 44; the sequence is QPRRTVEEELSKKS. A required for binding PPP1CC region spans residues 43-55; that stretch reads KSQKWDEMNILAT. The residue at position 44 (Ser-44) is a Phosphoserine; by ATM. Thr-73 is modified (phosphothreonine; by GSK3). Phosphoserine occurs at positions 87 and 89. A phosphothreonine mark is found at Thr-96 and Thr-116. A disordered region spans residues 104–142; that stretch reads LAAAEGSEPKFRTREQESSGEEDNDLSPEEREKKRQFEM. A compositionally biased stretch (basic and acidic residues) spans 110–120; that stretch reads SEPKFRTREQE. 3 positions are modified to phosphoserine: Ser-121, Ser-122, and Ser-130. The span at 121 to 130 shows a compositional bias: acidic residues; that stretch reads SSGEEDNDLS. Residues 131 to 142 show a composition bias toward basic and acidic residues; the sequence is PEEREKKRQFEM. The required for binding PPP1CC catalytic center, displacing metal ions and inhibition of PPP1CC catalytic activity stretch occupies residues 147–150; the sequence is HYNE. The segment at 163–205 is disordered; sequence KDLHDDDEDEEMSETADADSMNIEESNQGSTAGDHLQHKSQSS. A compositionally biased stretch (acidic residues) spans 167-179; it reads DDDEDEEMSETAD.

This sequence belongs to the protein phosphatase inhibitor 2 family. In terms of assembly, heterodimer with PP1. Post-translationally, phosphorylation on Ser-44 by ATM activates PP1 by dissociating the PP1-PPP1R2 complex. Phosphorylation on Thr-73 by GSK3 activates PP1 by dissociating the PP1-PPP1R2 complex. As to expression, central nervous system.

Functionally, inhibitor of protein-phosphatase 1. This is Protein phosphatase inhibitor 2 (Ppp1r2) from Rattus norvegicus (Rat).